Consider the following 404-residue polypeptide: Diphosphomevalonate decarboxylase mvd1 (404 aa).

(R)-5-diphosphomevalonate-binding positions include 25 to 28, arginine 82, 161 to 166, and threonine 217; these read YWGK and SGSACR.

The protein belongs to the diphosphomevalonate decarboxylase family. Homodimer.

The enzyme catalyses (R)-5-diphosphomevalonate + ATP = isopentenyl diphosphate + ADP + phosphate + CO2. It participates in isoprenoid biosynthesis; isopentenyl diphosphate biosynthesis via mevalonate pathway; isopentenyl diphosphate from (R)-mevalonate: step 3/3. Functionally, diphosphomevalonate decarboxylase; part of the second module of ergosterol biosynthesis pathway that includes the middle steps of the pathway. Mvd1 converts diphosphomevalonate into isopentenyl diphosphate. The second module is carried out in the vacuole and involves the formation of farnesyl diphosphate, which is also an important intermediate in the biosynthesis of ubiquinone, dolichol, heme and prenylated proteins. Activity by the mevalonate kinase erg12 (AFUA_4G07780) first converts mevalonate into 5-phosphomevalonate. 5-phosphomevalonate is then further converted to 5-diphosphomevalonate by the phosphomevalonate kinase erg8 (AFUA_5G10680). The diphosphomevalonate decarboxylase mvd1 (AFUA_4G07130) then produces isopentenyl diphosphate. The isopentenyl-diphosphate delta-isomerase idi1 (AFUA_6G11160) then catalyzes the 1,3-allylic rearrangement of the homoallylic substrate isopentenyl (IPP) to its highly electrophilic allylic isomer, dimethylallyl diphosphate (DMAPP). Finally the farnesyl diphosphate synthase erg20 (AFUA_5G02450) catalyzes the sequential condensation of isopentenyl pyrophosphate with dimethylallyl pyrophosphate, and then with the resultant geranylpyrophosphate to the ultimate product farnesyl pyrophosphate. The polypeptide is Diphosphomevalonate decarboxylase mvd1 (Aspergillus fumigatus (strain ATCC MYA-4609 / CBS 101355 / FGSC A1100 / Af293) (Neosartorya fumigata)).